A 287-amino-acid chain; its full sequence is Bifunctional protein FolD (287 aa).

NADP(+)-binding positions include 165–167, Thr190, and Ile231; that span reads GRG.

Belongs to the tetrahydrofolate dehydrogenase/cyclohydrolase family. Homodimer.

The catalysed reaction is (6R)-5,10-methylene-5,6,7,8-tetrahydrofolate + NADP(+) = (6R)-5,10-methenyltetrahydrofolate + NADPH. It catalyses the reaction (6R)-5,10-methenyltetrahydrofolate + H2O = (6R)-10-formyltetrahydrofolate + H(+). It functions in the pathway one-carbon metabolism; tetrahydrofolate interconversion. Catalyzes the oxidation of 5,10-methylenetetrahydrofolate to 5,10-methenyltetrahydrofolate and then the hydrolysis of 5,10-methenyltetrahydrofolate to 10-formyltetrahydrofolate. This chain is Bifunctional protein FolD, found in Heliobacterium modesticaldum (strain ATCC 51547 / Ice1).